The following is an 82-amino-acid chain: UPF0180 protein BC_1394 (82 aa).

The protein belongs to the UPF0180 family.

The protein is UPF0180 protein BC_1394 of Bacillus cereus (strain ATCC 14579 / DSM 31 / CCUG 7414 / JCM 2152 / NBRC 15305 / NCIMB 9373 / NCTC 2599 / NRRL B-3711).